A 426-amino-acid polypeptide reads, in one-letter code: Putative F-box/LRR-repeat protein At4g15060 (426 aa).

Residues 25–71 (MDKISRLPDDLLVKVLLFLPTKIAVSTSILSKRWEFLWMWLPKLEYH) form the F-box domain. 9 LRR repeats span residues 50-75 (STSILSKRWEFLWMWLPKLEYHNTNY), 80-106 (EQRLRSFINLNLQLHRAPIIESLRLKF), 160-187 (ILKLKDQILVDVPRMAYLPSLKYLLLKR), 188-213 (VTYKDSNSLHQLLSSCPVLKNLVVER), 221-259 (TLSITVSSLQRLTLKISRGGSFDELVINTPSLKYFKLTD), 265-290 (ETELDDDSYSYVFKDMPKLEEAHIDS), 311-337 (CVKVNAEEALYREGICFKQLEHLKLCP), 338-363 (CDSNWSKLLARLLKDSPNLRELEIKL), and 373-399 (DPACLENQLNYVVQSSIPSLERFTWTW).

This Arabidopsis thaliana (Mouse-ear cress) protein is Putative F-box/LRR-repeat protein At4g15060.